Here is a 186-residue protein sequence, read N- to C-terminus: C-type lectin domain family 19 member A (186 aa).

An N-terminal signal peptide occupies residues 1–19 (MQRWTLWAAAFLTLHSAQA). A C-type lectin domain is found at 47–179 (FKGHCYRFFP…CSRKFPFVCK (133 aa)). An N-linked (GlcNAc...) asparagine glycan is attached at Asn58. Intrachain disulfides connect Cys68–Cys178 and Cys151–Cys170.

The protein localises to the secreted. In Homo sapiens (Human), this protein is C-type lectin domain family 19 member A.